A 183-amino-acid polypeptide reads, in one-letter code: UPF0200 protein MMP1282 (183 aa).

Residue G8–S15 participates in ATP binding.

It belongs to the UPF0200 family.

This chain is UPF0200 protein MMP1282, found in Methanococcus maripaludis (strain DSM 14266 / JCM 13030 / NBRC 101832 / S2 / LL).